A 980-amino-acid chain; its full sequence is Macrophage colony-stimulating factor 1 receptor (980 aa).

The first 19 residues, 1–19, serve as a signal peptide directing secretion; sequence MGPRALLVLLVATAWHAQG. Over 20 to 514 the chain is Extracellular; it reads VPVIQPSGPE…QLPDELLFTP (495 aa). 5 consecutive Ig-like C2-type domains span residues 21–100, 107–197, 202–297, 299–397, and 400–499; these read PVIQ…IHLY, PWKV…KVQK, PATL…RVVE, AYLN…LTLR, and PEVR…WPIS. A disulfide bridge connects residues Cys-42 and Cys-84. Asn-45, Asn-73, Asn-94, Asn-153, Asn-275, Asn-286, Asn-302, Asn-335, Asn-410, Asn-477, and Asn-490 each carry an N-linked (GlcNAc...) asparagine glycan. Cystine bridges form between Cys-127/Cys-177 and Cys-224/Cys-278. Cysteines 417 and 482 form a disulfide. Residues 515-535 traverse the membrane as a helical segment; it reads VLLTCMSIMALLLLLLLLLLY. Residues 536–980 are Cytoplasmic-facing; it reads KYKQKPKYQV…LLQPNNYQFC (445 aa). A regulatory juxtamembrane domain region spans residues 539–571; sequence QKPKYQVRWKIIESYEGNSYTFIDPTQLPYNEK. 2 positions are modified to phosphotyrosine; by autocatalysis: Tyr-543 and Tyr-558. Positions 579-908 constitute a Protein kinase domain; sequence LQFGKTLGAG…PTFQQICSLL (330 aa). Residues 585–593 and Lys-613 contribute to the ATP site; that span reads LGAGAFGKV. Phosphotyrosine; by autocatalysis occurs at positions 696 and 705. A Phosphoserine modification is found at Ser-710. At Tyr-720 the chain carries Phosphotyrosine; by autocatalysis. The disordered stretch occupies residues 723-743; that stretch reads MRPVSTSSSNDSFSEEDLGKE. The active-site Proton acceptor is Asp-776. The segment at 794–816 is activation loop; the sequence is DFGLARDIMNDSNYIVKGNARLP. Residues Tyr-807 and Tyr-921 each carry the phosphotyrosine; by autocatalysis modification. Residues 918–959 form a disordered region; that stretch reads VPNYTNLPSSSSSSSSSSSSCRTGSGGGSSSEPEEESSSEHL. Over residues 926–940 the composition is skewed to low complexity; the sequence is SSSSSSSSSSSSCRT. Tyr-977 carries the phosphotyrosine; by autocatalysis modification.

Belongs to the protein kinase superfamily. Tyr protein kinase family. CSF-1/PDGF receptor subfamily. In terms of assembly, monomer. Homodimer. Interacts with CSF1 and IL34. Interaction with dimeric CSF1 or IL34 leads to receptor homodimerization. Interacts with INPPL1/SHIP2 and THOC5. Interacts (tyrosine phosphorylated) with PLCG2 (via SH2 domain). Interacts (tyrosine phosphorylated) with PIK3R1 (via SH2 domain). Interacts (tyrosine phosphorylated) with FYN, YES1 and SRC (via SH2 domain). Interacts (tyrosine phosphorylated) with CBL, GRB2 and SLA2. Post-translationally, autophosphorylated in response to CSF1 or IL34 binding. Phosphorylation at Tyr-558 is important for normal down-regulation of signaling by ubiquitination, internalization and degradation. Phosphorylation at Tyr-558 and Tyr-807 is important for interaction with SRC family members, including FYN, YES1 and SRC, and for subsequent activation of these protein kinases. Phosphorylation at Tyr-696 and Tyr-921 is important for interaction with GRB2. Phosphorylation at Tyr-720 is important for interaction with PIK3R1. Phosphorylation at Tyr-720 and Tyr-807 is important for interaction with PLCG2. Phosphorylation at Tyr-977 is important for interaction with CBL. Dephosphorylation by PTPN2 negatively regulates downstream signaling and macrophage differentiation. In terms of processing, ubiquitinated. Becomes rapidly polyubiquitinated after autophosphorylation, leading to its degradation.

Its subcellular location is the cell membrane. The catalysed reaction is L-tyrosyl-[protein] + ATP = O-phospho-L-tyrosyl-[protein] + ADP + H(+). Its activity is regulated as follows. Present in an inactive conformation in the absence of bound ligand. CSF1 or IL34 binding leads to dimerization and activation by autophosphorylation on tyrosine residues. Functionally, tyrosine-protein kinase that acts as a cell-surface receptor for CSF1 and IL34 and plays an essential role in the regulation of survival, proliferation and differentiation of hematopoietic precursor cells, especially mononuclear phagocytes, such as macrophages and monocytes. Promotes the release of pro-inflammatory chemokines in response to IL34 and CSF1, and thereby plays an important role in innate immunity and in inflammatory processes. Plays an important role in the regulation of osteoclast proliferation and differentiation, the regulation of bone resorption, and is required for normal bone and tooth development. Required for normal male and female fertility, and for normal development of milk ducts and acinar structures in the mammary gland during pregnancy. Promotes reorganization of the actin cytoskeleton, regulates formation of membrane ruffles, cell adhesion and cell migration, and promotes cancer cell invasion. Activates several signaling pathways in response to ligand binding, including the ERK1/2 and the JNK pathway. Phosphorylates PIK3R1, PLCG2, GRB2, SLA2 and CBL. Activation of PLCG2 leads to the production of the cellular signaling molecules diacylglycerol and inositol 1,4,5-trisphosphate, that then lead to the activation of protein kinase C family members, especially PRKCD. Phosphorylation of PIK3R1, the regulatory subunit of phosphatidylinositol 3-kinase, leads to activation of the AKT1 signaling pathway. Activated CSF1R also mediates activation of the MAP kinases MAPK1/ERK2 and/or MAPK3/ERK1, and of the SRC family kinases SRC, FYN and YES1. Activated CSF1R transmits signals both via proteins that directly interact with phosphorylated tyrosine residues in its intracellular domain, or via adapter proteins, such as GRB2. Promotes activation of STAT family members STAT3, STAT5A and/or STAT5B. Promotes tyrosine phosphorylation of SHC1 and INPP5D/SHIP-1. Receptor signaling is down-regulated by protein phosphatases, such as INPP5D/SHIP-1, that dephosphorylate the receptor and its downstream effectors, and by rapid internalization of the activated receptor. In the central nervous system, may play a role in the development of microglia macrophages. The sequence is that of Macrophage colony-stimulating factor 1 receptor (CSF1R) from Felis catus (Cat).